The chain runs to 588 residues: Myc box-dependent-interacting protein 1 (588 aa).

N-acetylalanine is present on Ala2. An interaction with BIN2 region spans residues 2 to 122 (AEMGSKGVTA…DYHQKLVDQA (121 aa)). Coiled coils occupy residues 15-42 (ASNV…TKDE) and 193-274 (HLVA…EKQH). A BAR domain is found at 29–276 (VLQKLGKADE…LVSLEKQHGS (248 aa)). Residues 279-355 (FTVKAQPSDN…PKHTPSKEMK (77 aa)) form a disordered region. 3 positions are modified to phosphoserine: Ser296, Ser298, and Ser304. Thr308 is subject to Phosphothreonine. Phosphoserine occurs at positions 324 and 332. The segment at 379–422 (FEAPGPFSEQASLLDLDFEPLPPVASPVKAPTPSGQSIPWDLWE) is clathrin-binding. The interval 448 to 484 (PSQTAEPGPAQPAEASEVVGGAQEPGETAASEATSSS) is disordered. Over residues 474 to 484 (ETAASEATSSS) the composition is skewed to low complexity. The SH3 domain maps to 515-588 (GFMFKVQAQH…FPENFTERVQ (74 aa)).

As to quaternary structure, heterodimer with AMPH. Binds SH3GLB1. Interacts (via SH3 domain) with DNM1. Interacts with SYNJ1. Interacts (via SH3 domain) with DNM2. Interacts with CLTC. Interacts with AP2A2. Interacts with AP2B1. Interacts with MYC (via N-terminal transactivation domain); the interaction requires the integrity of the conserved MYC box regions 1 and 2. Interacts with BIN2. Interacts with SNX4. Interacts (via BAR domain) with BACE1. Binds (via BAR domain) F-actin. Post-translationally, phosphorylated by protein kinase C. In terms of tissue distribution, isoform 1 is expressed mainly in the brain. Isoform 2 is widely expressed.

It is found in the nucleus. The protein resides in the cytoplasm. The protein localises to the endosome. Its subcellular location is the cell membrane. It localises to the sarcolemma. It is found in the T-tubule. Functionally, is a key player in the control of plasma membrane curvature, and membrane shaping and remodeling. Required in muscle cells for the formation of T-tubules, tubular invaginations of the plasma membrane that function in depolarization-contraction coupling. Required in muscle cells for the formation of T-tubules, tubular invaginations of the plasma membrane that function in depolarization-contraction coupling. Is a negative regulator of endocytosis. Is also involved in the regulation of intracellular vesicles sorting, modulation of BACE1 trafficking and the control of amyloid-beta production. In neuronal circuits, endocytosis regulation may influence the internalization of PHF-tau aggregates. May be involved in the regulation of MYC activity and the control cell proliferation. The protein is Myc box-dependent-interacting protein 1 (Bin1) of Mus musculus (Mouse).